The sequence spans 236 residues: Uridylate kinase (236 aa).

Residue 10–13 (KLSG) participates in ATP binding. Gly52 serves as a coordination point for UMP. Gly53 and Arg57 together coordinate ATP. UMP-binding positions include Asp72 and 133 to 140 (TGNPFFTT). Thr160, Tyr166, and Asp169 together coordinate ATP.

This sequence belongs to the UMP kinase family. Homohexamer.

It localises to the cytoplasm. It carries out the reaction UMP + ATP = UDP + ADP. The protein operates within pyrimidine metabolism; CTP biosynthesis via de novo pathway; UDP from UMP (UMPK route): step 1/1. Inhibited by UTP. Functionally, catalyzes the reversible phosphorylation of UMP to UDP. In Cupriavidus metallidurans (strain ATCC 43123 / DSM 2839 / NBRC 102507 / CH34) (Ralstonia metallidurans), this protein is Uridylate kinase.